The following is a 259-amino-acid chain: MLMVISPAKTLDYETPPVTHRFTQPQYLDHAQELIQQLRQLTPLQISELMKLSDKLAGLNAARYASWHPEFTPENAKQALLAFKGDVYTGLNAEDFGEDDFAFAQDHLCMLSGLYGVLRPLDLMQPYRLEMGTRLANARGKDLYAFWGERISQWLNEALAAQGDDVLLNLASNEYFGAVKRKALQARVIDTEFKDLKNGQYKIISFYAKKARGMMARYVIRERLRDPAGLKDFNAHGYYFSAEQSGPDQLVFLRDAPQD.

Belongs to the UPF0246 family.

This is UPF0246 protein PA14_18590 from Pseudomonas aeruginosa (strain UCBPP-PA14).